The sequence spans 745 residues: Mediator of RNA polymerase II transcription subunit 25 (745 aa).

Positions 1-226 (MVPGSEGPAR…PRHMVLVRGL (226 aa)) are interaction with the Mediator complex. Residues 233–243 (SSTSGSLQTKQ) are compositionally biased toward polar residues. Disordered stretches follow at residues 233 to 266 (SSTSGSLQTKQAVPLPPAPASAATLSAAPPQALP) and 299 to 374 (LGPR…VTPG). The span at 252 to 262 (ASAATLSAAPP) shows a compositional bias: low complexity. Positions 324–342 (PAPPLAPVPPGAPKPPPAS) are enriched in pro residues. Residues 389 to 543 (LGGQQSVSNK…VNGIRQVITN (155 aa)) form an interaction with VP16 region. The segment at 395-545 (VSNKLLAWSG…GIRQVITNHK (151 aa)) is interaction with CREBBP. Interaction with RARA regions lie at residues 563-652 (APPV…LLNP) and 639-705 (PGAN…WPTQ). The tract at residues 584–738 (LRAPQPQPQG…PGLQPSVMED (155 aa)) is disordered. Positions 596–617 (GASAATGQPQPQGATQAPTGAP) are enriched in low complexity. Over residues 618-631 (QGPPGAAPGPPPSG) the composition is skewed to pro residues. An LXXLL motif motif is present at residues 645 to 649 (LRSLL). Over residues 652-663 (PAPPQTGVPPPQ) the composition is skewed to pro residues. Residue Arg723 is modified to Asymmetric dimethylarginine.

This sequence belongs to the Mediator complex subunit 25 family. Component of the Mediator complex, which is composed of MED1, MED4, MED6, MED7, MED8, MED9, MED10, MED11, MED12, MED13, MED13L, MED14, MED15, MED16, MED17, MED18, MED19, MED20, MED21, MED22, MED23, MED24, MED25, MED26, MED27, MED29, MED30, MED31, CCNC, CDK8 and CDC2L6/CDK11. The MED12, MED13, CCNC and CDK8 subunits form a distinct module termed the CDK8 module. Mediator containing the CDK8 module is less active than Mediator lacking this module in supporting transcriptional activation. Individual preparations of the Mediator complex lacking one or more distinct subunits have been variously termed ARC, CRSP, DRIP, PC2, SMCC and TRAP. Interacts with CREBBP. Interacts with ESR1, GR and THRB in a ligand-dependent fashion. Binds the Herpes simplex virus activator VP16. Interacts with RARA and RXRA in a ligand-dependent fashion.

Its subcellular location is the nucleus. Functionally, component of the Mediator complex, a coactivator involved in the regulated transcription of nearly all RNA polymerase II-dependent genes. Mediator functions as a bridge to convey information from gene-specific regulatory proteins to the basal RNA polymerase II transcription machinery. Mediator is recruited to promoters by direct interactions with regulatory proteins and serves as a scaffold for the assembly of a functional preinitiation complex with RNA polymerase II and the general transcription factors. Required for RARA/RXRA-mediated transcription. The sequence is that of Mediator of RNA polymerase II transcription subunit 25 (Med25) from Mus musculus (Mouse).